The primary structure comprises 460 residues: Argininosuccinate lyase (460 aa).

This sequence belongs to the lyase 1 family. Argininosuccinate lyase subfamily.

It is found in the cytoplasm. The catalysed reaction is 2-(N(omega)-L-arginino)succinate = fumarate + L-arginine. It functions in the pathway amino-acid biosynthesis; L-arginine biosynthesis; L-arginine from L-ornithine and carbamoyl phosphate: step 3/3. This Rhodopirellula baltica (strain DSM 10527 / NCIMB 13988 / SH1) protein is Argininosuccinate lyase.